Consider the following 81-residue polypeptide: Large ribosomal subunit protein bL31B (81 aa).

It belongs to the bacterial ribosomal protein bL31 family. Type B subfamily. As to quaternary structure, part of the 50S ribosomal subunit.

The chain is Large ribosomal subunit protein bL31B from Bdellovibrio bacteriovorus (strain ATCC 15356 / DSM 50701 / NCIMB 9529 / HD100).